The chain runs to 742 residues: Phosphatidylinositol 4-phosphate 5-kinase its3 (742 aa).

Disordered regions lie at residues 1 to 21 and 82 to 228; these read MKID…IPSY and LFKE…PDIG. Low complexity-rich tracts occupy residues 90 to 105 and 129 to 142; these read PSNP…SNDS and PSSN…LQNL. 2 stretches are compositionally biased toward polar residues: residues 158-181 and 193-218; these read RSSS…SSSQ and EKNS…TSGS. A PIPK domain is found at 264-662; sequence GHENYVTAYN…RFYKFVESSI (399 aa). The disordered stretch occupies residues 677-742; sequence QDGQRVNKQQ…RNVTTNTSSS (66 aa). Residues 680 to 719 show a composition bias toward polar residues; sequence QRVNKQQSVNAGNVRTNNKHGSLNNNTAPSSRNAKSTSAH.

Interacts with opy1 (via domain PH 1); the interaction is direct but opy1 does not appear to regulate its3 localization or function. In terms of processing, phosphorylated by casein kinase I. Phosphorylation inactivates the enzyme.

It localises to the cell membrane. It carries out the reaction a 1,2-diacyl-sn-glycero-3-phospho-(1D-myo-inositol 4-phosphate) + ATP = a 1,2-diacyl-sn-glycero-3-phospho-(1D-myo-inositol-4,5-bisphosphate) + ADP + H(+). In terms of biological role, catalyzes the phosphorylation of phosphatidylinositol 4-phosphate on the fifth hydroxyl of the myo-inositol ring, to form phosphatidylinositol 4,5-bisphosphate. Involved, together with the calcineurin ppb1, in cytokinesis. This Schizosaccharomyces pombe (strain 972 / ATCC 24843) (Fission yeast) protein is Phosphatidylinositol 4-phosphate 5-kinase its3 (its3).